Reading from the N-terminus, the 297-residue chain is uncharacterized protein (297 aa).

9 consecutive transmembrane segments (helical) span residues 1-21 (MSWIIFYTIIAALLILDLGII), 32-52 (GSILLSLFYFIISCLFGIYVY), 72-92 (AMALDNIFIISIIFQFFNIPS), 98-118 (VLFFGIIGVIIFKAIIIYGGI), 120-140 (LIHKFSWLLYILAVILIATGI), 194-214 (ILIETIDLVFAIDSIAAIFAI), 218-238 (VYIIYTSNIFAILGLRSLFFC), 253-273 (LALILIFIGFKIFIHHYIEIP), and 274-294 (AYISLTVTISSLLFGIIASIL).

This sequence belongs to the TerC family.

The protein localises to the cell membrane. This is an uncharacterized protein from Rickettsia prowazekii (strain Madrid E).